Consider the following 119-residue polypeptide: Holo-[acyl-carrier-protein] synthase (119 aa).

The Mg(2+) site is built by Asp8 and Glu58.

Belongs to the P-Pant transferase superfamily. AcpS family. The cofactor is Mg(2+).

It is found in the cytoplasm. It carries out the reaction apo-[ACP] + CoA = holo-[ACP] + adenosine 3',5'-bisphosphate + H(+). Functionally, transfers the 4'-phosphopantetheine moiety from coenzyme A to a Ser of acyl-carrier-protein. This is Holo-[acyl-carrier-protein] synthase from Streptococcus thermophilus (strain ATCC BAA-491 / LMD-9).